Reading from the N-terminus, the 268-residue chain is Phosphoethanolamine/phosphocholine phosphatase (268 aa).

The active-site Nucleophile is aspartate 32. Mg(2+) is bound by residues aspartate 32 and aspartate 34. The Proton donor role is filled by aspartate 34. Substrate is bound by residues aspartate 43 and aspartate 123. Aspartate 203 is a binding site for Mg(2+).

This sequence belongs to the HAD-like hydrolase superfamily. PHOSPHO family. Requires Mg(2+) as cofactor. Expressed at sites of mineralization in bone and cartilage. Highly expressed in hypertrophic chondrocytes compared to non-chondrogenic tissues. Expressed in chondrocytes but not in heart, liver, lung, kidney, spleen, muscle, adipose tissues not duodenum. In diaphyseal cortical bone, it is expressed in the osteoid layer of the periosteum, forming surfaces of growing osteons, and newly formed osteocytes, whereas it is not expressed in the endosteum and closed osteons. In growth plate cartilage, it is limited to the early hypertrophic chondrocytes and the ossification groove of Ranvier. Highly expressed on the mineralization surfaces of the cartilage remnants and trabecular bone within the primary spongiosa. Expressed in 17-day-old embryonic calvaria, the osteoid present on the intramembranous and periosteal bone surfaces but not in soft tissues examined.

Its subcellular location is the extracellular vesicle. It catalyses the reaction phosphoethanolamine + H2O = ethanolamine + phosphate. The enzyme catalyses phosphocholine + H2O = choline + phosphate. In terms of biological role, phosphatase that has a high activity toward phosphoethanolamine (PEA) and phosphocholine (PCho). Involved in the generation of inorganic phosphate for bone mineralization. This chain is Phosphoethanolamine/phosphocholine phosphatase (PHOSPHO1), found in Gallus gallus (Chicken).